Consider the following 126-residue polypeptide: Small ribosomal subunit protein uS13 (126 aa).

The interval 93–126 is disordered; sequence RRGLPVRGQRTKTNARTRKGPKRTVAGKKKAGRK.

This sequence belongs to the universal ribosomal protein uS13 family. In terms of assembly, part of the 30S ribosomal subunit. Forms a loose heterodimer with protein S19. Forms two bridges to the 50S subunit in the 70S ribosome.

Functionally, located at the top of the head of the 30S subunit, it contacts several helices of the 16S rRNA. In the 70S ribosome it contacts the 23S rRNA (bridge B1a) and protein L5 of the 50S subunit (bridge B1b), connecting the 2 subunits; these bridges are implicated in subunit movement. Contacts the tRNAs in the A and P-sites. The sequence is that of Small ribosomal subunit protein uS13 from Beutenbergia cavernae (strain ATCC BAA-8 / DSM 12333 / CCUG 43141 / JCM 11478 / NBRC 16432 / NCIMB 13614 / HKI 0122).